Reading from the N-terminus, the 607-residue chain is DNA mismatch repair protein MutL (607 aa).

Belongs to the DNA mismatch repair MutL/HexB family.

Its function is as follows. This protein is involved in the repair of mismatches in DNA. It is required for dam-dependent methyl-directed DNA mismatch repair. May act as a 'molecular matchmaker', a protein that promotes the formation of a stable complex between two or more DNA-binding proteins in an ATP-dependent manner without itself being part of a final effector complex. The polypeptide is DNA mismatch repair protein MutL (Gemmatimonas aurantiaca (strain DSM 14586 / JCM 11422 / NBRC 100505 / T-27)).